We begin with the raw amino-acid sequence, 629 residues long: Carboxypeptidase Y homolog ARB_06361 (629 aa).

A signal peptide spans 1–18 (MLITWLLDVLLLAPPVAA). Asn157 and Asn197 each carry an N-linked (GlcNAc...) asparagine glycan. Ser235 is a catalytic residue. Cysteines 326 and 355 form a disulfide. Asn405 and Asn418 each carry an N-linked (GlcNAc...) asparagine glycan. Asp453 is an active-site residue. A substrate-binding site is contributed by Cys456. 2 N-linked (GlcNAc...) asparagine glycosylation sites follow: Asn463 and Asn554.

It belongs to the peptidase S10 family.

It is found in the secreted. The catalysed reaction is Release of a C-terminal amino acid with broad specificity.. In terms of biological role, involved in degradation of small peptides. This is Carboxypeptidase Y homolog ARB_06361 from Arthroderma benhamiae (strain ATCC MYA-4681 / CBS 112371) (Trichophyton mentagrophytes).